The chain runs to 77 residues: Acyl carrier protein (77 aa).

Positions 2–77 (SDVAEKVKKI…DAIAYIEEKK (76 aa)) constitute a Carrier domain. An O-(pantetheine 4'-phosphoryl)serine modification is found at Ser-37.

The protein belongs to the acyl carrier protein (ACP) family. Post-translationally, 4'-phosphopantetheine is transferred from CoA to a specific serine of apo-ACP by AcpS. This modification is essential for activity because fatty acids are bound in thioester linkage to the sulfhydryl of the prosthetic group.

The protein localises to the cytoplasm. It participates in lipid metabolism; fatty acid biosynthesis. Carrier of the growing fatty acid chain in fatty acid biosynthesis. The sequence is that of Acyl carrier protein from Desulfovibrio desulfuricans (strain ATCC 27774 / DSM 6949 / MB).